We begin with the raw amino-acid sequence, 153 residues long: Small ribosomal subunit protein bS6 (153 aa).

Positions 97 to 153 (EEGPSAMMRKADRDRERDDRGGGFRGERDGGGFRGDRGDRGDRGPRRPRDEETADEE) are disordered. Positions 105–147 (RKADRDRERDDRGGGFRGERDGGGFRGDRGDRGDRGPRRPRDE) are enriched in basic and acidic residues.

This sequence belongs to the bacterial ribosomal protein bS6 family.

Functionally, binds together with bS18 to 16S ribosomal RNA. The protein is Small ribosomal subunit protein bS6 of Bradyrhizobium sp. (strain BTAi1 / ATCC BAA-1182).